A 379-amino-acid chain; its full sequence is Protein FAM53B (379 aa).

2 disordered regions span residues 206–257 and 302–348; these read CPAE…HKQR and AQND…AGKE. Over residues 212 to 236 the composition is skewed to polar residues; that stretch reads SPESTPELQRRSGQSGLARSRSQPC. Positions 239–249 are enriched in basic residues; it reads NHQKIGVKRRR. Residues 246 to 249 carry the Nuclear localization signal motif; that stretch reads KRRR. Over residues 326 to 342 the composition is skewed to polar residues; that stretch reads QSDSSSADALIHQSESS.

This sequence belongs to the FAM53 family. In terms of assembly, interacts with ctnnb1. In terms of tissue distribution, mainly expressed in proliferating tissues.

Its subcellular location is the nucleus. Acts as a regulator of Wnt signaling pathway by regulating beta-catenin (ctnnb1) nuclear localization. Required for appendage regeneration by regulating cell proliferation. In Danio rerio (Zebrafish), this protein is Protein FAM53B.